We begin with the raw amino-acid sequence, 102 residues long: MAGQKIRIRLKAYDHEVIDSSARKIVDTVTRTGASVAGPVPLPTEKNVYCVIRSPHKYKDSREHFEMRTHKRLIDIIDPTPKTVDSLMRLDLPAGVDIEIKL.

The protein belongs to the universal ribosomal protein uS10 family. In terms of assembly, part of the 30S ribosomal subunit.

Its function is as follows. Involved in the binding of tRNA to the ribosomes. The polypeptide is Small ribosomal subunit protein uS10 (Kineococcus radiotolerans (strain ATCC BAA-149 / DSM 14245 / SRS30216)).